A 23-amino-acid chain; its full sequence is Alyteserin-1d (23 aa).

Residue Asn23 is modified to Asparagine amide.

In terms of tissue distribution, expressed by the skin glands.

It localises to the secreted. It is found in the target cell membrane. Its function is as follows. Antibacterial peptide with amphipathic alpha-helical structure. Shows selective growth inhibitory activity against the Gram-negative bacteria E.coli (MIC=25 uM) Has a weak hemolytic activity against human erythrocytes (LC(50)&gt;100 uM). Is very weakly active against S.aureus (MIC=200 uM). The sequence is that of Alyteserin-1d from Alytes obstetricans (Common midwife toad).